The following is a 198-amino-acid chain: Nucleoside triphosphate pyrophosphatase (198 aa).

Catalysis depends on aspartate 72, which acts as the Proton acceptor.

The protein belongs to the Maf family. The cofactor is a divalent metal cation.

It is found in the cytoplasm. The enzyme catalyses a ribonucleoside 5'-triphosphate + H2O = a ribonucleoside 5'-phosphate + diphosphate + H(+). The catalysed reaction is a 2'-deoxyribonucleoside 5'-triphosphate + H2O = a 2'-deoxyribonucleoside 5'-phosphate + diphosphate + H(+). Functionally, nucleoside triphosphate pyrophosphatase. May have a dual role in cell division arrest and in preventing the incorporation of modified nucleotides into cellular nucleic acids. This chain is Nucleoside triphosphate pyrophosphatase, found in Corynebacterium diphtheriae (strain ATCC 700971 / NCTC 13129 / Biotype gravis).